A 157-amino-acid chain; its full sequence is MSDKPAYLTRDGRARLEAELEELVTKGRKEIAERINAAKELGDISESGEYEDAKNQQAHLEGRIREIKSILARAQIIDEENGDNHEVRIGSRVTVRIDGEDGEETWTIVGSTEAKPSEGKISNESPIGSALLGKRPRQKVTVETPSGTMKLTIVDIQ.

The stretch at 13–75 (RARLEAELEE…EIKSILARAQ (63 aa)) forms a coiled coil. Residues 113–142 (EAKPSEGKISNESPIGSALLGKRPRQKVTV) form a disordered region.

Belongs to the GreA/GreB family.

Functionally, necessary for efficient RNA polymerase transcription elongation past template-encoded arresting sites. The arresting sites in DNA have the property of trapping a certain fraction of elongating RNA polymerases that pass through, resulting in locked ternary complexes. Cleavage of the nascent transcript by cleavage factors such as GreA or GreB allows the resumption of elongation from the new 3'terminus. GreA releases sequences of 2 to 3 nucleotides. This chain is Transcription elongation factor GreA, found in Roseiflexus sp. (strain RS-1).